A 112-amino-acid polypeptide reads, in one-letter code: Colipase (112 aa).

A signal peptide spans 1 to 17 (MKVLVVLLVTLVAVAYA). A propeptide spans 18–22 (APGPR) (enterostatin, activation peptide). 5 cysteine pairs are disulfide-bonded: Cys-34-Cys-45, Cys-40-Cys-56, Cys-44-Cys-78, Cys-66-Cys-86, and Cys-80-Cys-104.

Belongs to the colipase family. Forms a 1:1 stoichiometric complex with pancreatic lipase. As to expression, expressed by the pancreas.

The protein resides in the secreted. Its function is as follows. Colipase is a cofactor of pancreatic lipase. It allows the lipase to anchor itself to the lipid-water interface. Without colipase the enzyme is washed off by bile salts, which have an inhibitory effect on the lipase. Enterostatin has a biological activity as a satiety signal. The polypeptide is Colipase (Rattus norvegicus (Rat)).